A 163-amino-acid polypeptide reads, in one-letter code: Olfactory marker protein (163 aa).

Ala-2 is subject to N-acetylalanine.

The protein belongs to the olfactory marker protein family. In terms of assembly, interacts with BEX1 and BEX2. As to expression, uniquely associated with mature olfactory receptor neurons.

The protein localises to the cytoplasm. Functionally, may act as a modulator of the olfactory signal-transduction cascade. The protein is Olfactory marker protein (Omp) of Mus musculus (Mouse).